The sequence spans 343 residues: MTITPQEALQRTIEHREIFHDEMLHLMRLIMRGDMSPVMAAAIITGLRVKKETIGEIAAAATVMREFANHVEVQDNSNFVDIVGTGGDGSHTFNISTASMFIAAAAGAKVAKHGNRGVSSKSGSADVLDALGVNIDLQPDQVAASIAETGMGFMFAPNHHPAMKNIAAVRRELGVRTIFNILGPLTNPAGAPNQLMGVFHPDLVGIQVRVMQRLGAQHVLVVYGKDGMDEVSLGAATLVGELRDGKVHEYEIHPEDFGLQMVSNRTLKVENAEESRTMLLGALDNQPGVAREIVTLNAGTALYAANIAESIADGIQLAREAIASGKARAKVDELVRFTQQFKR.

5-phospho-alpha-D-ribose 1-diphosphate-binding positions include G84, 87-88 (GD), T92, 94-97 (NIST), 112-120 (KHGNRGVSS), and S124. Residue G84 coordinates anthranilate. S96 is a Mg(2+) binding site. N115 provides a ligand contact to anthranilate. R170 is a binding site for anthranilate. Residues D229 and E230 each coordinate Mg(2+).

It belongs to the anthranilate phosphoribosyltransferase family. In terms of assembly, homodimer. Mg(2+) serves as cofactor.

It catalyses the reaction N-(5-phospho-beta-D-ribosyl)anthranilate + diphosphate = 5-phospho-alpha-D-ribose 1-diphosphate + anthranilate. It participates in amino-acid biosynthesis; L-tryptophan biosynthesis; L-tryptophan from chorismate: step 2/5. In terms of biological role, catalyzes the transfer of the phosphoribosyl group of 5-phosphorylribose-1-pyrophosphate (PRPP) to anthranilate to yield N-(5'-phosphoribosyl)-anthranilate (PRA). This Burkholderia ambifaria (strain ATCC BAA-244 / DSM 16087 / CCUG 44356 / LMG 19182 / AMMD) (Burkholderia cepacia (strain AMMD)) protein is Anthranilate phosphoribosyltransferase.